A 175-amino-acid polypeptide reads, in one-letter code: MGKVLSKIFGNKEMRILMLGLDAAGKTTILYKLKLGQSVTTIPTVGFNVETVTYKNVKFNVWDVGGQDKIRPLWRHYYTGTQGLIFVVDCADRDRIDEARQELHRIINDREMRDAIILIFANKQDLPDAMKPHEIQEKLGLTRIRDRNWYVQPSCATTGDGLYEGLTWLTSNYKS.

G2 is lipidated: N-myristoyl glycine. K3 carries N6-myristoyl lysine lipidation. Residues 23–28, 41–44, 63–67, 122–125, and 155–156 contribute to the GTP site; these read AAGKTT, TIPT, DVGGQ, NKQD, and CA.

Belongs to the small GTPase superfamily. Arf family.

Its subcellular location is the cytoplasm. The protein resides in the cytosol. It localises to the cell membrane. It is found in the endosome membrane. The protein localises to the recycling endosome membrane. Its subcellular location is the cell projection. The protein resides in the filopodium membrane. It localises to the ruffle. It is found in the cleavage furrow. The protein localises to the midbody. Its subcellular location is the midbody ring. It carries out the reaction GTP + H2O = GDP + phosphate + H(+). GTP-binding protein involved in protein trafficking; regulates endocytic recycling and cytoskeleton remodeling. May modulate vesicle budding and uncoating within the Golgi apparatus. May contribute to the regulation of dendritic branching, filopodia extension and dendritic spine development. The polypeptide is ADP-ribosylation factor 6 (ARF6) (Gallus gallus (Chicken)).